Consider the following 348-residue polypeptide: DnaJ homolog subfamily B member 5 (348 aa).

The region spanning 4 to 68 (DYYKILGIPS…KKRGLYDQYG (65 aa)) is the J domain.

This is DnaJ homolog subfamily B member 5 (DNAJB5) from Bos taurus (Bovine).